We begin with the raw amino-acid sequence, 429 residues long: Ribosomal RNA small subunit methyltransferase B (429 aa).

Residues 254 to 260, aspartate 277, aspartate 303, and aspartate 322 each bind S-adenosyl-L-methionine; that span reads CAAPGGK. The active-site Nucleophile is the cysteine 375.

It belongs to the class I-like SAM-binding methyltransferase superfamily. RsmB/NOP family.

It localises to the cytoplasm. It carries out the reaction cytidine(967) in 16S rRNA + S-adenosyl-L-methionine = 5-methylcytidine(967) in 16S rRNA + S-adenosyl-L-homocysteine + H(+). Specifically methylates the cytosine at position 967 (m5C967) of 16S rRNA. The protein is Ribosomal RNA small subunit methyltransferase B of Escherichia coli O7:K1 (strain IAI39 / ExPEC).